A 772-amino-acid polypeptide reads, in one-letter code: MLKLFSAFRKNKIWDFNGGIHPPEMKTQSNGTPLRQVPLAQRFVIPLKQHIGAEGELCVSVGDKVLRGQPLTRGRGKMLPVHAPTSGTVTAIAPHSTAHPSALAELSVIIDADGEDCWIPRDGWADYRSRRREELIERIHQFGVAGLGGAGFPTGVKLQGGGDKIETLIINAAECEPYITADDRLMQDCAAQVVEGIRILAHILQPREILIGIEDNKPQAISMLRAVLADSHDISMRVIPTKYPSGGAKQLTYILTGKQVPHGGRSSDIGVLMQNVGTAYAVKRAVIDGEPITERVVTLTGEAIARPGNVWARLGTPVRHLLNDAGFCPSADQMVIMGGPLMGFTLPWLDVPVVKITNCLLAPSANELGEPQEEQSCIRCSACADACPADLLPQQLYWFSKGQQHDKATTHNIADCIECGACAWVCPSNIPLVQYFRQEKAEIAAIRQEEKRAAEAKARFEARQARLEREKAARLERHKSAAVQPAAKDKDAIAAALARVKEKQAQATQPIVIKAGERPDNSAIIAAREARKAQARAKQAELQQTNDAATVTDPRKTAVEAAIARAKARKLEQQQANAEPEQQVDPRKAAVEAAIARAKARKLEQQQANAEPEQQVDPRKAAVEAAIARAKARKLEQQQANAEPEEPVDPRKAAVEAAIARAKARKLEQQQANAEPEEPVDPRKAAVEAAITRAKARKLEQQQANAEPEEQVDPRKAAVAAAIARAKARKLEQQQANAEPEEQVDPRKAAVAAAIARVQAKKAVQQKVVNED.

4Fe-4S ferredoxin-type domains follow at residues 369–397 (GEPQ…QQLY) and 407–436 (KATT…VQYF). [4Fe-4S] cluster contacts are provided by cysteine 377, cysteine 380, cysteine 383, cysteine 387, cysteine 416, cysteine 419, cysteine 422, and cysteine 426. Disordered stretches follow at residues 602 to 684 (KLEQ…DPRK), 696 to 717 (ARKL…PRKA), and 727 to 746 (KARK…QVDP). A compositionally biased stretch (low complexity) spans 605-615 (QQQANAEPEQQ).

This sequence belongs to the 4Fe4S bacterial-type ferredoxin family. RnfC subfamily. As to quaternary structure, the complex is composed of six subunits: RsxA, RsxB, RsxC, RsxD, RsxE and RsxG. [4Fe-4S] cluster is required as a cofactor.

It localises to the cell inner membrane. Its function is as follows. Part of a membrane-bound complex that couples electron transfer with translocation of ions across the membrane. Required to maintain the reduced state of SoxR. The chain is Ion-translocating oxidoreductase complex subunit C from Escherichia coli O157:H7 (strain EC4115 / EHEC).